Here is a 403-residue protein sequence, read N- to C-terminus: Phosphopentomutase (403 aa).

The Mn(2+) site is built by D13, D298, H303, D339, H340, and H351.

The protein belongs to the phosphopentomutase family. Mn(2+) serves as cofactor.

The protein resides in the cytoplasm. The enzyme catalyses 2-deoxy-alpha-D-ribose 1-phosphate = 2-deoxy-D-ribose 5-phosphate. The catalysed reaction is alpha-D-ribose 1-phosphate = D-ribose 5-phosphate. It functions in the pathway carbohydrate degradation; 2-deoxy-D-ribose 1-phosphate degradation; D-glyceraldehyde 3-phosphate and acetaldehyde from 2-deoxy-alpha-D-ribose 1-phosphate: step 1/2. Its function is as follows. Isomerase that catalyzes the conversion of deoxy-ribose 1-phosphate (dRib-1-P) and ribose 1-phosphate (Rib-1-P) to deoxy-ribose 5-phosphate (dRib-5-P) and ribose 5-phosphate (Rib-5-P), respectively. In Streptococcus thermophilus (strain ATCC BAA-250 / LMG 18311), this protein is Phosphopentomutase.